The chain runs to 212 residues: External core antigen (212 aa).

An N-terminal signal peptide occupies residues M1–A19. The segment at G25–L27 is HBEAG. Residues N165 to C212 form a disordered region. Residues V178–S205 are compositionally biased toward basic residues. The 1; half-length repeat unit spans residues S184–P190. The interval S184 to Q206 is 3 X 8 AA repeats of S-P-R-R-R-R-S-Q. The propeptide occupies S184 to C212. Repeat copies occupy residues S191–Q198 and S199–Q206.

It belongs to the orthohepadnavirus precore antigen family. In terms of assembly, homodimerizes. Phosphorylated. In terms of processing, cleaved by host furin.

It localises to the secreted. Its subcellular location is the host nucleus. Its function is as follows. May regulate immune response to the intracellular capsid in acting as a T-cell tolerogen, by having an immunoregulatory effect which prevents destruction of infected cells by cytotoxic T-cells. This immune regulation may predispose to chronicity during perinatal infections and prevent severe liver injury during adult infections. This chain is External core antigen, found in Hepatitis B virus genotype B1 subtype adw (isolate Japan/pJDW233/1988) (HBV-B).